The following is a 111-amino-acid chain: Phosphoribosyl-ATP pyrophosphatase (111 aa).

This sequence belongs to the PRA-PH family.

Its subcellular location is the cytoplasm. The enzyme catalyses 1-(5-phospho-beta-D-ribosyl)-ATP + H2O = 1-(5-phospho-beta-D-ribosyl)-5'-AMP + diphosphate + H(+). Its pathway is amino-acid biosynthesis; L-histidine biosynthesis; L-histidine from 5-phospho-alpha-D-ribose 1-diphosphate: step 2/9. This is Phosphoribosyl-ATP pyrophosphatase (hisE) from Pseudomonas aeruginosa (strain ATCC 15692 / DSM 22644 / CIP 104116 / JCM 14847 / LMG 12228 / 1C / PRS 101 / PAO1).